Consider the following 71-residue polypeptide: Serine palmitoyltransferase small subunit A (71 aa).

The Cytoplasmic segment spans residues 1-12 (MAGMALARAWKQ). Residues 13–29 (MSWFYYQYLLVTALYML) form a helical membrane-spanning segment. The Lumenal segment spans residues 30–34 (EPWER). Residues 35–57 (TVFNSMLVSVVGMALYTGYVFMP) form a helical membrane-spanning segment. Residues 58–71 (QHIMAILHYFEIVQ) are Cytoplasmic-facing.

Belongs to the SPTSS family. SPTSSA subfamily. As to quaternary structure, component of the serine palmitoyltransferase (SPT) complex, which is composed of SPTLC1, SPTLC2 or SPTLC3 and SPTSSA or SPTSSB. The heterodimer consisting of SPTLC1 and SPTLC2/SPTLC3 forms the catalytic core of the enzyme, while SPTSSA or SPTSSB subunits determine substrate specificity. SPT also interacts with ORMDL proteins, especially ORMDL3, which negatively regulate SPT activity in the presence of ceramides. Interacts with MBOAT7; the interaction plays a role in MBOAT7 localization to mitochondria-associated membranes.

The protein localises to the endoplasmic reticulum membrane. Its pathway is lipid metabolism; sphingolipid metabolism. Functionally, component of the serine palmitoyltransferase multisubunit enzyme (SPT) that catalyzes the initial and rate-limiting step in sphingolipid biosynthesis by condensing L-serine and activated acyl-CoA (most commonly palmitoyl-CoA) to form long-chain bases. The SPT complex is composed of SPTLC1, SPTLC2 or SPTLC3 and SPTSSA or SPTSSB. Within this complex, the heterodimer consisting of SPTLC1 and SPTLC2/SPTLC3 forms the catalytic core. Within the SPT complex, SPTSSA stimulates the catalytic activity and plays a role in substrate specificity, which depends upon the overall complex composition. The SPTLC1-SPTLC2-SPTSSA complex shows a strong preference for C16-CoA substrate, while the SPTLC1-SPTLC3-SPTSSA isozyme uses both C14-CoA and C16-CoA as substrates, with a slight preference for C14-CoA. Independently of its action as a SPT component, may be involved in MBOAT7 localization to mitochondria-associated membranes, a membrane bridge between the endoplasmic reticulum and mitochondria, may hence affect MBOAT7-catalyzed incorporation of arachidonic acid into phosphatidylinositol. This chain is Serine palmitoyltransferase small subunit A, found in Mus musculus (Mouse).